We begin with the raw amino-acid sequence, 102 residues long: MDISIISDKNNPLLQRREVKFTVSFDAATPSIKDVKMKLVAVLNADKKVLVVDTLDQIFGKLEAEGYAKIYNDEKAMETIETKSVLEKNKIEEEAEAEVAEE.

This sequence belongs to the eukaryotic ribosomal protein eS24 family.

The protein is Small ribosomal subunit protein eS24 of Methanococcus maripaludis (strain C5 / ATCC BAA-1333).